The chain runs to 214 residues: UPF0301 protein blr1492 (214 aa).

The tract at residues 1–22 is disordered; that stretch reads MAPTGKRTGESTRSTGPAPPSS.

Belongs to the UPF0301 (AlgH) family.

In Bradyrhizobium diazoefficiens (strain JCM 10833 / BCRC 13528 / IAM 13628 / NBRC 14792 / USDA 110), this protein is UPF0301 protein blr1492.